Consider the following 602-residue polypeptide: Aspartate--tRNA(Asp/Asn) ligase (602 aa).

Glu-175 serves as a coordination point for L-aspartate. The aspartate stretch occupies residues 199-202 (QIFK). Arg-221 provides a ligand contact to L-aspartate. ATP contacts are provided by residues 221 to 223 (RDE) and Gln-230. Residue His-458 participates in L-aspartate binding. Glu-492 is an ATP binding site. Arg-499 is an L-aspartate binding site. 544 to 547 (GLDR) is an ATP binding site.

This sequence belongs to the class-II aminoacyl-tRNA synthetase family. Type 1 subfamily. In terms of assembly, homodimer.

It localises to the cytoplasm. The catalysed reaction is tRNA(Asx) + L-aspartate + ATP = L-aspartyl-tRNA(Asx) + AMP + diphosphate. Aspartyl-tRNA synthetase with relaxed tRNA specificity since it is able to aspartylate not only its cognate tRNA(Asp) but also tRNA(Asn). Reaction proceeds in two steps: L-aspartate is first activated by ATP to form Asp-AMP and then transferred to the acceptor end of tRNA(Asp/Asn). In Cupriavidus metallidurans (strain ATCC 43123 / DSM 2839 / NBRC 102507 / CH34) (Ralstonia metallidurans), this protein is Aspartate--tRNA(Asp/Asn) ligase.